The sequence spans 371 residues: Cysteine proteinase 1 (371 aa).

An N-terminal signal peptide occupies residues 1–18 (MAHRVLLLLSLASAAAVA). The propeptide at 19-136 (AAVDAEDPLI…HEAPVLPTDG (118 aa)) is activation peptide. Intrachain disulfides connect Cys158–Cys208 and Cys192–Cys241. Residue Cys161 is part of the active site. A glycan (N-linked (GlcNAc...) asparagine) is linked at Asn254. Cys297 and Cys354 are disulfide-bonded. Active-site residues include His303 and Asn330.

Belongs to the peptidase C1 family. In terms of tissue distribution, expressed during the late stages of seed ripening, in mature seeds and during germination.

In terms of biological role, involved in the degradation of the storage protein zein. May play a role in proteolysis during emergencies. The protein is Cysteine proteinase 1 (CCP1) of Zea mays (Maize).